Here is a 121-residue protein sequence, read N- to C-terminus: Holo-[acyl-carrier-protein] synthase (121 aa).

2 residues coordinate Mg(2+): Asp8 and Glu58.

It belongs to the P-Pant transferase superfamily. AcpS family. The cofactor is Mg(2+).

It is found in the cytoplasm. It carries out the reaction apo-[ACP] + CoA = holo-[ACP] + adenosine 3',5'-bisphosphate + H(+). In terms of biological role, transfers the 4'-phosphopantetheine moiety from coenzyme A to a Ser of acyl-carrier-protein. The sequence is that of Holo-[acyl-carrier-protein] synthase from Bacillus velezensis (strain DSM 23117 / BGSC 10A6 / LMG 26770 / FZB42) (Bacillus amyloliquefaciens subsp. plantarum).